A 1064-amino-acid polypeptide reads, in one-letter code: MPHLPLASFRPPFWGLRHSRGLPRFHSVSTQSEPHGSPISRRNREAKQKRLREKQATLETDIAGESKSPAESIKAWSPKEVVLYEIPTKPGEKKDVSGPLPPAYSPRYVEAAWYPWWVREGFFKPEYQARLPQATGETFSMCIPPPNVTGSLHIGHALTVAIQDALVRWHRMRGDQVLWVPGSDHAGIATQAVVEKQLWKEQGVRRHELSREAFLREVWQWKEAKGGEICEQLRALGASLDWDRECFTMDVGSSVAVTEAFVRLYKAGLLYRNRRLGRWMSCPLTQLSRRFQVENRPLPGRTQLRLPGCPTPVSFGLLFSVAFPVDGEPDAEVVVGTTRPETLPGDVAVAVHPDDSRYTHLHGRQLRHPLMGQPLPLITDYAVQPHVGTGAVKVTPAHSPADAEMGARHGLSPLNVIAEDGTMTSLCGDWLQGLHRFVAREKIVSVLSERGLFRGLQNHPMVLPICSRSGDVIEYLLKSQWFVRCQEMGARAAQAVESGALELSPSFHQKNWQHWFSHIGDWCVSRQLWWGHQIPAYLVVEDHAQGEEDCWVVGRSEAEAREVAAELTGRPGAELALERDPDVLDTWFSSALFPFSALGWPQETPDLARFYPLSLLETGSDLLLFWVGRMVMLGTQLTGRLPFSKVLLHPMVRDRQGRKMSKSLGNVLDPRHIISGAEMQVLQEKLRSGNLDPAELAIVAAAQKKDFPHGIPECGTDALRFTLCSHGVQGGDLCLSVSEVQSCRHFCNKIWNALRFILNALGEKFVPQPAKELSPSCHMDAWILSRLALTARECERGFLTRELSLVTHALHHFWLHNLCDVYLEAVKPVLRHSPCPPGPPQVLFSCADIGLRLLAPLMPFLAEELWQRLPPRPGCPPAPSISVAPYPSPCSLEHWRQPELERRFSRVQEVVQVLRALRATYQLTKARPRVLLQSSEPGDQGLFEAFLEPLGTLSHCGAVGLLPPGAAAPSGWAQAPLSDTVQVYMELQGLVDPQIQLPLLAARRSKLQKQLDGLMARTPSEGEAGTQRQQRLSSLQLELSKLDKAASHLRQLMDEPPAPGSPEL.

A mitochondrion-targeting transit peptide spans 1 to 26 (MPHLPLASFRPPFWGLRHSRGLPRFH). The tract at residues 25–65 (FHSVSTQSEPHGSPISRRNREAKQKRLREKQATLETDIAGE) is disordered. Over residues 42 to 56 (RNREAKQKRLREKQA) the composition is skewed to basic and acidic residues. The short motif at 146–156 (PNVTGSLHIGH) is the 'HIGH' region element. The short motif at 659 to 663 (KMSKS) is the 'KMSKS' region element. Lysine 662 lines the ATP pocket.

Belongs to the class-I aminoacyl-tRNA synthetase family.

The protein resides in the mitochondrion. The enzyme catalyses tRNA(Val) + L-valine + ATP = L-valyl-tRNA(Val) + AMP + diphosphate. Catalyzes the attachment of valine to tRNA(Val) in a two-step reaction: valine is first activated by ATP to form Val-AMP and then transferred to the acceptor end of tRNA(Val). This Macaca mulatta (Rhesus macaque) protein is Valine--tRNA ligase, mitochondrial (VARS2).